Reading from the N-terminus, the 254-residue chain is Ditrans,polycis-undecaprenyl-diphosphate synthase ((2E,6E)-farnesyl-diphosphate specific) (254 aa).

D25 is an active-site residue. Position 25 (D25) interacts with Mg(2+). Substrate contacts are provided by residues 26–29 (GNGR), W30, R38, H42, and 70–72 (SSE). The active-site Proton acceptor is the N73. Substrate contacts are provided by W74, R76, and R193. Residue H198 participates in Mg(2+) binding. 199-201 (RIS) serves as a coordination point for substrate. Residue E212 participates in Mg(2+) binding.

It belongs to the UPP synthase family. As to quaternary structure, homodimer. Mg(2+) serves as cofactor.

The catalysed reaction is 8 isopentenyl diphosphate + (2E,6E)-farnesyl diphosphate = di-trans,octa-cis-undecaprenyl diphosphate + 8 diphosphate. Catalyzes the sequential condensation of isopentenyl diphosphate (IPP) with (2E,6E)-farnesyl diphosphate (E,E-FPP) to yield (2Z,6Z,10Z,14Z,18Z,22Z,26Z,30Z,34E,38E)-undecaprenyl diphosphate (di-trans,octa-cis-UPP). UPP is the precursor of glycosyl carrier lipid in the biosynthesis of bacterial cell wall polysaccharide components such as peptidoglycan and lipopolysaccharide. In Photorhabdus laumondii subsp. laumondii (strain DSM 15139 / CIP 105565 / TT01) (Photorhabdus luminescens subsp. laumondii), this protein is Ditrans,polycis-undecaprenyl-diphosphate synthase ((2E,6E)-farnesyl-diphosphate specific).